Reading from the N-terminus, the 299-residue chain is UDP-N-acetylenolpyruvoylglucosamine reductase (299 aa).

In terms of domain architecture, FAD-binding PCMH-type spans 26 to 191 (GIGGPAKYFV…VSATFQLNAS (166 aa)). The active site involves arginine 170. Cysteine 218 serves as the catalytic Proton donor. Residue glutamate 288 is part of the active site.

This sequence belongs to the MurB family. Requires FAD as cofactor.

The protein localises to the cytoplasm. It catalyses the reaction UDP-N-acetyl-alpha-D-muramate + NADP(+) = UDP-N-acetyl-3-O-(1-carboxyvinyl)-alpha-D-glucosamine + NADPH + H(+). It functions in the pathway cell wall biogenesis; peptidoglycan biosynthesis. Its function is as follows. Cell wall formation. The protein is UDP-N-acetylenolpyruvoylglucosamine reductase of Protochlamydia amoebophila (strain UWE25).